The chain runs to 80 residues: Exodeoxyribonuclease 7 small subunit (80 aa).

Belongs to the XseB family. In terms of assembly, heterooligomer composed of large and small subunits.

It is found in the cytoplasm. The catalysed reaction is Exonucleolytic cleavage in either 5'- to 3'- or 3'- to 5'-direction to yield nucleoside 5'-phosphates.. Its function is as follows. Bidirectionally degrades single-stranded DNA into large acid-insoluble oligonucleotides, which are then degraded further into small acid-soluble oligonucleotides. The chain is Exodeoxyribonuclease 7 small subunit from Erwinia tasmaniensis (strain DSM 17950 / CFBP 7177 / CIP 109463 / NCPPB 4357 / Et1/99).